Here is a 310-residue protein sequence, read N- to C-terminus: p-hydroxybenzoic acid efflux pump subunit AaeA (310 aa).

Residues 12 to 32 (AITVVLVILAFIAIFNAWVYY) traverse the membrane as a helical segment.

It belongs to the membrane fusion protein (MFP) (TC 8.A.1) family.

The protein resides in the cell inner membrane. Functionally, forms an efflux pump with AaeB. The sequence is that of p-hydroxybenzoic acid efflux pump subunit AaeA from Shigella flexneri.